Consider the following 632-residue polypeptide: Acyl-coenzyme A oxidase-like protein (632 aa).

376–381 lines the FAD pocket; sequence TGGMGY.

It belongs to the acyl-CoA oxidase family. It depends on FAD as a cofactor.

The protein is Acyl-coenzyme A oxidase-like protein (Acoxl) of Mus musculus (Mouse).